Consider the following 381-residue polypeptide: Flagellar P-ring protein (381 aa).

The first 33 residues, 1–33 (MQFFNTLHPTRPHWLLAALCLIASLLGAGTAQA), serve as a signal peptide directing secretion.

This sequence belongs to the FlgI family. The basal body constitutes a major portion of the flagellar organelle and consists of four rings (L,P,S, and M) mounted on a central rod.

It localises to the periplasm. Its subcellular location is the bacterial flagellum basal body. Functionally, assembles around the rod to form the L-ring and probably protects the motor/basal body from shearing forces during rotation. The chain is Flagellar P-ring protein from Albidiferax ferrireducens (strain ATCC BAA-621 / DSM 15236 / T118) (Rhodoferax ferrireducens).